The sequence spans 249 residues: Small ribosomal subunit protein uS3 (249 aa).

One can recognise a KH type-2 domain in the interval 39 to 109 (IRTYVLARLK…EVKIDVVEVV (71 aa)). Positions 226–239 (KERRNDAGARNRDS) are enriched in basic and acidic residues. Residues 226 to 249 (KERRNDAGARNRDSRTKRRHRTKR) are disordered. Basic residues predominate over residues 240-249 (RTKRRHRTKR).

Belongs to the universal ribosomal protein uS3 family. In terms of assembly, part of the 30S ribosomal subunit. Forms a tight complex with proteins S10 and S14.

Binds the lower part of the 30S subunit head. Binds mRNA in the 70S ribosome, positioning it for translation. This chain is Small ribosomal subunit protein uS3, found in Pelodictyon phaeoclathratiforme (strain DSM 5477 / BU-1).